Here is a 126-residue protein sequence, read N- to C-terminus: Hydrogenase maturation factor HypA (126 aa).

H2 contacts Ni(2+). 4 residues coordinate Zn(2+): C78, C81, C97, and C100.

The protein belongs to the HypA/HybF family.

Its function is as follows. Involved in the maturation of [NiFe] hydrogenases. Required for nickel insertion into the metal center of the hydrogenase. This Methanococcus maripaludis (strain C6 / ATCC BAA-1332) protein is Hydrogenase maturation factor HypA.